The sequence spans 426 residues: Cytochrome c biogenesis protein CcsB (426 aa).

The next 3 membrane-spanning stretches (helical) occupy residues 14–34 (LKIA…GTLI), 72–92 (SFWF…CSFR), and 162–182 (LGPI…TYGS).

Belongs to the Ccs1/CcsB family. In terms of assembly, may interact with CcsA.

Its subcellular location is the cellular thylakoid membrane. Its function is as follows. Required during biogenesis of c-type cytochromes (cytochrome c6 and cytochrome f) at the step of heme attachment. This Prochlorococcus marinus (strain NATL1A) protein is Cytochrome c biogenesis protein CcsB.